Here is a 349-residue protein sequence, read N- to C-terminus: MQLSFRWYGDSDPVTLKQIKQIPDMKHIVSAIYDVPVGDVWTKDKINALKSSIEQEGLTLSVMESLPVHESIKLGEANRDNLIENYKKSLRNLGESGIKTVCYNFMPVFDWTRSNLDYELEDGSKTLMYDNDFVKDIDPVTTNLNLPGWDESYTKEEMATLIEKYRQFDEEDLWKNLEYFLNAVLPIAIEHDIDLTIHPDDPPWSIFGIPRIIKTKESYQRLIAINSSKNNGICFCTGSLGCLEENDLPEIIKEFGDHIHFVHMRNIKRLDNHSFVESGHLSKYGSVDMKAVVRALKDINYKGTIRPDHGRMIWGETGKAGYGLFDRALGATYINGLIEGVETNDTTIS.

This sequence belongs to the mannonate dehydratase family. The cofactor is Fe(2+). It depends on Mn(2+) as a cofactor.

The catalysed reaction is D-mannonate = 2-dehydro-3-deoxy-D-gluconate + H2O. It participates in carbohydrate metabolism; pentose and glucuronate interconversion. Its function is as follows. Catalyzes the dehydration of D-mannonate. In Oceanobacillus iheyensis (strain DSM 14371 / CIP 107618 / JCM 11309 / KCTC 3954 / HTE831), this protein is Mannonate dehydratase.